The primary structure comprises 481 residues: MPDSGSLGPPTSLPEQPPAPPATAPDAPAATVTDRPVTSSVAHFLAGLHPPVTRPSSPPSPSMPPASSNPSSPPSSSMPPASWAPPSPLSPPAPSLPPTSPPATAPETSAATGSDSVVRRVPVGPTGLGTTALSLARRQAAVPPDAVPAPSGPSAEGPVVPGLYHHPIPEPDPVRVAEVSRRIKRWAEDEVRLYPEEWEGQFDGFSVGRYMVACHPDAPTVDHLMLATRLMVAENAVDDCYCEDHGGSPVGLGGRLLLAHTALDHLHTTAEYAPEWSESLGSDAPRRAYRSAMDHFVRAATPSQADRYRHDMARLHLGYLAEAAWAETGHVPEVCEYLAMRQFNNFRPCPTITDTVGGYELPADLHARPDMQRVIALAGNATTIVNDLYSYTKELDSPGRHLNLPVVIAEREHLSDRDAYLKAVEVHNELMHAFEAAAAELAADCPVPAVLRFLRGVAAWVDGNHDWHRTNTYRYSLPDFW.

Disordered stretches follow at residues 1–125 (MPDS…PVGP) and 139–160 (QAAVPPDAVPAPSGPSAEGPVV). Residues 11–23 (TSLPEQPPAPPAT) show a composition bias toward pro residues. Positions 24–33 (APDAPAATVT) are enriched in low complexity. Pro residues-rich tracts occupy residues 52-64 (VTRPSSPPSPSMP) and 71-104 (SSPPSSSMPPASWAPPSPLSPPAPSLPPTSPPAT). Low complexity predominate over residues 105–114 (APETSAATGS). Residues aspartate 238, aspartate 239, glutamate 243, asparagine 386, serine 390, and glutamate 394 each contribute to the Mg(2+) site.

The protein belongs to the terpene synthase family. 2-methylisoborneol synthase subfamily. Requires Mg(2+) as cofactor.

The enzyme catalyses (E)-2-methylgeranyl diphosphate + H2O = 2-methylisoborneol + diphosphate. In terms of biological role, catalyzes the cyclization of 2-methylgeranyl diphosphate (2-MeGPP) to 2-methylisoborneol (2-MIB), which likely involves the intermediacy of 2-methyllinalyl diphosphate. This is 2-methylisoborneol synthase (tpc) from Streptomyces lasalocidi (Streptomyces lasaliensis).